The chain runs to 287 residues: Ribosomal RNA small subunit methyltransferase I (287 aa).

The protein belongs to the methyltransferase superfamily. RsmI family.

It is found in the cytoplasm. The enzyme catalyses cytidine(1402) in 16S rRNA + S-adenosyl-L-methionine = 2'-O-methylcytidine(1402) in 16S rRNA + S-adenosyl-L-homocysteine + H(+). Its function is as follows. Catalyzes the 2'-O-methylation of the ribose of cytidine 1402 (C1402) in 16S rRNA. In Streptococcus pyogenes serotype M18 (strain MGAS8232), this protein is Ribosomal RNA small subunit methyltransferase I.